The chain runs to 192 residues: Ion-translocating oxidoreductase complex subunit A (192 aa).

6 helical membrane-spanning segments follow: residues 5–25 (LLLL…FLGL), 39–59 (IGMS…SYLV), 65–85 (LPFD…AVVV), 102–122 (ALGI…VALL), 134–154 (AIFG…FSAM), and 171–191 (AIAM…TGLV).

Belongs to the NqrDE/RnfAE family. The complex is composed of six subunits: RnfA, RnfB, RnfC, RnfD, RnfE and RnfG.

It is found in the cell inner membrane. Part of a membrane-bound complex that couples electron transfer with translocation of ions across the membrane. The protein is Ion-translocating oxidoreductase complex subunit A of Shewanella piezotolerans (strain WP3 / JCM 13877).